A 1293-amino-acid polypeptide reads, in one-letter code: Cilia- and flagella-associated protein 57 A (1293 aa).

A WD 1 repeat occupies 72–113 (PGTKGITCMTLSPSKRLLAWSEDCDSGIIVVFDLIKLDKLEK). Positions 117–143 (QNYQEPSDKDKLDKQAEKDRRDRFEKE) are disordered. A compositionally biased stretch (basic and acidic residues) spans 122–143 (PSDKDKLDKQAEKDRRDRFEKE). 5 WD repeats span residues 309 to 348 (PKNE…KNPY), 359 to 398 (DMKA…MQLN), 411 to 450 (FHSD…LENS), 535 to 574 (RGSG…PQKT), and 700 to 739 (SHFG…YQVK). Coiled coils occupy residues 756-1016 (RDQY…REKT), 1045-1079 (IKEL…FKRT), and 1209-1285 (INHL…QIQN).

It belongs to the CFAP57 family. As to quaternary structure, forms a heterodimer with CFAP57C. Associates with components of the nexin-dynein regulatory complex (N-DRC) and the CFAP184:CFAP263 complex.

It is found in the cell projection. The protein resides in the cilium. Its function is as follows. Associates with components of the nexin-dynein regulatory complex (N-DRC), a key regulator of ciliary/flagellar motility, and might act as an inner dynein arm (IDA) hub or linkage. The polypeptide is Cilia- and flagella-associated protein 57 A (CFAP57A) (Tetrahymena thermophila (strain SB210)).